Consider the following 953-residue polypeptide: Zinc finger CCCH domain-containing protein 18 (953 aa).

M1 carries the N-acetylmethionine modification. The segment covering M1–P14 has biased composition (basic and acidic residues). Disordered regions lie at residues M1–P222 and Q391–R928. The residue at position 6 (S6) is a Phosphoserine. Residues E15 to D26 show a composition bias toward acidic residues. S34, S46, S53, S59, S67, S74, S78, S83, and S95 each carry phosphoserine. Positions Q60–R72 are enriched in acidic residues. Residues C97–E106 are compositionally biased toward acidic residues. The stretch at E105–V134 forms a coiled coil. Basic and acidic residues predominate over residues D107–D124. Phosphothreonine is present on T109. Phosphoserine is present on residues S110 and S118. Acidic residues-rich tracts occupy residues E125–E136 and Q143–K158. The span at G159–K168 shows a compositional bias: basic and acidic residues. T162 carries the post-translational modification Phosphothreonine. Residues S173 and S179 each carry the phosphoserine modification. The span at G175–D190 shows a compositional bias: basic and acidic residues. Over residues D191 to E207 the composition is skewed to acidic residues. Over residues G208–K217 the composition is skewed to basic and acidic residues. A C3H1-type zinc finger spans residues R219 to V245. Residues E396–K482 show a composition bias toward basic and acidic residues. The stretch at H399–D464 forms a coiled coil. S487 carries the post-translational modification Phosphoserine. Residue K510 forms a Glycyl lysine isopeptide (Lys-Gly) (interchain with G-Cter in SUMO2) linkage. The span at K510–R520 shows a compositional bias: basic and acidic residues. Phosphoserine is present on residues S532, S534, and S536. Positions S545–P606 are enriched in low complexity. Residues K622 and K661 each participate in a glycyl lysine isopeptide (Lys-Gly) (interchain with G-Cter in SUMO2) cross-link. Residues K661–R670 show a composition bias toward basic and acidic residues. Composition is skewed to low complexity over residues G692 to S725 and A736 to A750. Positions K760–S774 are enriched in basic and acidic residues. K766 is covalently cross-linked (Glycyl lysine isopeptide (Lys-Gly) (interchain with G-Cter in SUMO2)). Low complexity predominate over residues P778–Q798. K814 bears the N6-acetyllysine mark. K817 participates in a covalent cross-link: Glycyl lysine isopeptide (Lys-Gly) (interchain with G-Cter in SUMO2). Basic and acidic residues predominate over residues A824–Q841. A phosphoserine mark is found at S842, S852, S868, S893, and S896. Low complexity predominate over residues S893 to P906. A Glycyl lysine isopeptide (Lys-Gly) (interchain with G-Cter in SUMO2) cross-link involves residue K908. Polar residues predominate over residues S916–L925. Positions K921–P950 form a coiled coil.

As to quaternary structure, interacts with ZFC3H1 in a RNase-insensitive manner.

Its subcellular location is the nucleus. In Homo sapiens (Human), this protein is Zinc finger CCCH domain-containing protein 18.